The following is a 297-amino-acid chain: Calponin-1 (297 aa).

Residues 28–131 (HQREQELREW…STLLALASMA (104 aa)) form the Calponin-homology (CH) domain. Calponin-like repeat units lie at residues 164-189 (IGLQMGTNKFASQQGMTAYGTRRHLY), 204-229 (ISLQMGTNKGASQAGMTAPGTKRQIF), and 243-268 (VSLQMGSNKGASQRGMTVYGLPRQVY). Thr-170 bears the Phosphothreonine; by ROCK2 mark. Residue Ser-175 is modified to Phosphoserine; by ROCK2. 2 positions are modified to phosphothreonine; by ROCK2: Thr-180 and Thr-184. Residue Thr-259 is modified to Phosphothreonine; by ROCK2.

The protein belongs to the calponin family. In terms of assembly, part of cGMP kinase signaling complex at least composed of ACTA2/alpha-actin, CNN1/calponin H1, PLN/phospholamban, PRKG1 and ITPR1. Smooth muscle, and tissues containing significant amounts of smooth muscle.

Functionally, thin filament-associated protein that is implicated in the regulation and modulation of smooth muscle contraction. It is capable of binding to actin, calmodulin and tropomyosin. The interaction of calponin with actin inhibits the actomyosin Mg-ATPase activity. The chain is Calponin-1 (CNN1) from Homo sapiens (Human).